The chain runs to 196 residues: ATP-dependent Clp protease proteolytic subunit (196 aa).

The Nucleophile role is filled by Ser101. His126 is an active-site residue.

The protein belongs to the peptidase S14 family. In terms of assembly, component of the chloroplastic Clp protease core complex.

It is found in the plastid. It localises to the chloroplast stroma. The catalysed reaction is Hydrolysis of proteins to small peptides in the presence of ATP and magnesium. alpha-casein is the usual test substrate. In the absence of ATP, only oligopeptides shorter than five residues are hydrolyzed (such as succinyl-Leu-Tyr-|-NHMec, and Leu-Tyr-Leu-|-Tyr-Trp, in which cleavage of the -Tyr-|-Leu- and -Tyr-|-Trp bonds also occurs).. Cleaves peptides in various proteins in a process that requires ATP hydrolysis. Has a chymotrypsin-like activity. Plays a major role in the degradation of misfolded proteins. In Eucalyptus globulus subsp. globulus (Tasmanian blue gum), this protein is ATP-dependent Clp protease proteolytic subunit.